We begin with the raw amino-acid sequence, 1203 residues long: DNA-directed RNA polymerase subunit beta' (1203 aa).

Residues Cys60, Cys62, Cys75, and Cys78 each coordinate Zn(2+). Asp449, Asp451, and Asp453 together coordinate Mg(2+). Zn(2+) is bound by residues Cys818, Cys892, Cys899, and Cys902.

This sequence belongs to the RNA polymerase beta' chain family. The RNAP catalytic core consists of 2 alpha, 1 beta, 1 beta' and 1 omega subunit. When a sigma factor is associated with the core the holoenzyme is formed, which can initiate transcription. The cofactor is Mg(2+). It depends on Zn(2+) as a cofactor.

The catalysed reaction is RNA(n) + a ribonucleoside 5'-triphosphate = RNA(n+1) + diphosphate. Functionally, DNA-dependent RNA polymerase catalyzes the transcription of DNA into RNA using the four ribonucleoside triphosphates as substrates. The protein is DNA-directed RNA polymerase subunit beta' of Bacillus mycoides (strain KBAB4) (Bacillus weihenstephanensis).